Reading from the N-terminus, the 1776-residue chain is Signal-induced proliferation-associated 1-like protein 3 (1776 aa).

Disordered regions lie at residues 41–157 and 240–325; these read AQNG…GRAF and PGAL…EASR. A compositionally biased stretch (low complexity) spans 54-69; sequence PAATTTRPSPTTPAMP. Composition is skewed to polar residues over residues 89-99 and 112-129; these read EQSNPSPSQDT and RNLQ…SSGS. Position 94 is a phosphoserine (S94). Residues 131-140 show a composition bias toward basic residues; the sequence is AFHRLSRRRS. A Phosphoserine modification is found at S140. The span at 257-268 shows a compositional bias: polar residues; it reads GQPTKDSLQSLQ. Position 394 is a phosphoserine (S394). Residues 438 to 461 are disordered; the sequence is SRASVGSPGGSSEAHMAEPTLSTH. Residues 605–822 enclose the Rap-GAP domain; the sequence is LLKLDEQGLC…RTRQEYLKDL (218 aa). In terms of domain architecture, PDZ spans 960–1024; that stretch reads DMTLRRNGLG…DQMIDLLRTS (65 aa). Disordered stretches follow at residues 1040 to 1104, 1117 to 1164, and 1184 to 1632; these read PRRG…AQSL, RESQ…ATYA, and DPHF…LDPG. Polar residues-rich tracts occupy residues 1074-1104 and 1151-1160; these read APWQ…AQSL and PSGSFSTPGS. The span at 1190 to 1201 shows a compositional bias: low complexity; the sequence is DGMSSGDSSSGG. The segment covering 1239–1255 has biased composition (basic and acidic residues); it reads SRQDAAGKDSPNRHSKG. Over residues 1260-1275 the composition is skewed to low complexity; that stretch reads SSHSSSNTLSSNASSS. The span at 1298–1316 shows a compositional bias: polar residues; that stretch reads GGSSDSGIDTTLYTSSPSC. A compositionally biased stretch (basic and acidic residues) spans 1344–1357; the sequence is SAGRPHPVDRRREV. Phosphoserine is present on S1358. Position 1381 is a phosphothreonine (T1381). Polar residues predominate over residues 1409–1436; that stretch reads VYKTASAETPRPSQLSQCSPFQLSTSVP. N6-acetyllysine is present on K1442. The span at 1503–1512 shows a compositional bias: basic and acidic residues; it reads TIEDDLKKLI. 2 stretches are compositionally biased toward polar residues: residues 1526 to 1541 and 1566 to 1578; these read GQSP…SDES and LFTS…SSTL. A phosphoserine mark is found at S1538 and S1541. Positions 1589 to 1601 are enriched in low complexity; that stretch reads PPSGAPSTTPATG. 2 positions are modified to phosphoserine: S1614 and S1617. Over residues 1620-1630 the composition is skewed to basic and acidic residues; it reads DGRDRPLRRLD. S1672 bears the Phosphoserine mark. Residues 1678-1705 form a disordered region; it reads AHSPVHSHLSLERGPQTPRATPTMSEES. A phosphothreonine mark is found at T1694 and T1698. Residues 1715-1769 are a coiled coil; that stretch reads QLEVMLKQLHTDLQKEKQDKVVLQSEVASLRQNNQRLQEESQAASEQLRKFAELF.

Its subcellular location is the apical cell membrane. Plays a critical role in epithelial cell morphogenesis, polarity, adhesion and cytoskeletal organization in the lens. This is Signal-induced proliferation-associated 1-like protein 3 (Sipa1l3) from Mus musculus (Mouse).